The primary structure comprises 196 residues: Peptidyl-tRNA hydrolase (196 aa).

Y18 serves as a coordination point for tRNA. Residue H23 is the Proton acceptor of the active site. The tRNA site is built by F69, N71, and N117.

This sequence belongs to the PTH family. Monomer.

It localises to the cytoplasm. The enzyme catalyses an N-acyl-L-alpha-aminoacyl-tRNA + H2O = an N-acyl-L-amino acid + a tRNA + H(+). Functionally, hydrolyzes ribosome-free peptidyl-tRNAs (with 1 or more amino acids incorporated), which drop off the ribosome during protein synthesis, or as a result of ribosome stalling. Its function is as follows. Catalyzes the release of premature peptidyl moieties from peptidyl-tRNA molecules trapped in stalled 50S ribosomal subunits, and thus maintains levels of free tRNAs and 50S ribosomes. This Aliivibrio salmonicida (strain LFI1238) (Vibrio salmonicida (strain LFI1238)) protein is Peptidyl-tRNA hydrolase.